A 179-amino-acid chain; its full sequence is ATP synthase subunit b (179 aa).

Residues 27 to 47 (TAITFLVMLAVLAKFAWGPIV) form a helical membrane-spanning segment.

The protein belongs to the ATPase B chain family. As to quaternary structure, F-type ATPases have 2 components, F(1) - the catalytic core - and F(0) - the membrane proton channel. F(1) has five subunits: alpha(3), beta(3), gamma(1), delta(1), epsilon(1). F(0) has three main subunits: a(1), b(2) and c(10-14). The alpha and beta chains form an alternating ring which encloses part of the gamma chain. F(1) is attached to F(0) by a central stalk formed by the gamma and epsilon chains, while a peripheral stalk is formed by the delta and b chains.

The protein resides in the cell inner membrane. Its function is as follows. F(1)F(0) ATP synthase produces ATP from ADP in the presence of a proton or sodium gradient. F-type ATPases consist of two structural domains, F(1) containing the extramembraneous catalytic core and F(0) containing the membrane proton channel, linked together by a central stalk and a peripheral stalk. During catalysis, ATP synthesis in the catalytic domain of F(1) is coupled via a rotary mechanism of the central stalk subunits to proton translocation. In terms of biological role, component of the F(0) channel, it forms part of the peripheral stalk, linking F(1) to F(0). The protein is ATP synthase subunit b of Anaeromyxobacter dehalogenans (strain 2CP-C).